The following is a 124-amino-acid chain: Large ribosomal subunit protein bL12 (124 aa).

It belongs to the bacterial ribosomal protein bL12 family. Homodimer. Part of the ribosomal stalk of the 50S ribosomal subunit. Forms a multimeric L10(L12)X complex, where L10 forms an elongated spine to which 2 to 4 L12 dimers bind in a sequential fashion. Binds GTP-bound translation factors.

Functionally, forms part of the ribosomal stalk which helps the ribosome interact with GTP-bound translation factors. Is thus essential for accurate translation. This Wolinella succinogenes (strain ATCC 29543 / DSM 1740 / CCUG 13145 / JCM 31913 / LMG 7466 / NCTC 11488 / FDC 602W) (Vibrio succinogenes) protein is Large ribosomal subunit protein bL12.